Consider the following 503-residue polypeptide: 11-hydroxysugiol 20-monooxygenase (503 aa).

Residues 2-22 form a helical membrane-spanning segment; sequence QVLIVASLAFLAAWLVYSRWS. Cys-446 provides a ligand contact to heme.

It belongs to the cytochrome P450 family. Heme is required as a cofactor. As to expression, highly expressed in roots.

Its subcellular location is the membrane. The catalysed reaction is 11-hydroxysugiol + reduced [NADPH--hemoprotein reductase] + O2 = 11,20-dihydroxysugiol + oxidized [NADPH--hemoprotein reductase] + H2O + H(+). The enzyme catalyses 11-hydroxyferruginol + reduced [NADPH--hemoprotein reductase] + O2 = 11,20-dihydroxyferruginol + oxidized [NADPH--hemoprotein reductase] + H2O + H(+). The protein operates within secondary metabolite biosynthesis; terpenoid biosynthesis. In terms of biological role, monooxygenase that oxidizes 11-hydroxysugiol to produce 11,20-dihydroxysugiol. Can oxidize 11-hydroxyferruginol to produce 11,20-dihydroxyferruginol. These products are intermediates in tanshinone biosynthesis. The protein is 11-hydroxysugiol 20-monooxygenase of Salvia miltiorrhiza (Chinese sage).